The chain runs to 181 residues: ATP synthase subunit delta (181 aa).

Belongs to the ATPase delta chain family. F-type ATPases have 2 components, F(1) - the catalytic core - and F(0) - the membrane proton channel. F(1) has five subunits: alpha(3), beta(3), gamma(1), delta(1), epsilon(1). F(0) has three main subunits: a(1), b(2) and c(10-14). The alpha and beta chains form an alternating ring which encloses part of the gamma chain. F(1) is attached to F(0) by a central stalk formed by the gamma and epsilon chains, while a peripheral stalk is formed by the delta and b chains.

It localises to the cell inner membrane. Functionally, f(1)F(0) ATP synthase produces ATP from ADP in the presence of a proton or sodium gradient. F-type ATPases consist of two structural domains, F(1) containing the extramembraneous catalytic core and F(0) containing the membrane proton channel, linked together by a central stalk and a peripheral stalk. During catalysis, ATP synthesis in the catalytic domain of F(1) is coupled via a rotary mechanism of the central stalk subunits to proton translocation. Its function is as follows. This protein is part of the stalk that links CF(0) to CF(1). It either transmits conformational changes from CF(0) to CF(1) or is implicated in proton conduction. The chain is ATP synthase subunit delta from Fervidobacterium nodosum (strain ATCC 35602 / DSM 5306 / Rt17-B1).